Consider the following 281-residue polypeptide: Bis(5'-nucleosyl)-tetraphosphatase, symmetrical (281 aa).

Belongs to the Ap4A hydrolase family.

It carries out the reaction P(1),P(4)-bis(5'-adenosyl) tetraphosphate + H2O = 2 ADP + 2 H(+). In terms of biological role, hydrolyzes diadenosine 5',5'''-P1,P4-tetraphosphate to yield ADP. The chain is Bis(5'-nucleosyl)-tetraphosphatase, symmetrical from Pectobacterium carotovorum subsp. carotovorum (strain PC1).